The chain runs to 326 residues: MTCFQTIAVIGAGAWGTALAAVAARAGRDVTLYARDADHASHIASARENPRLPGIPLASRIAVTADLARAARADTVLIVVPAQHLRGAVMHVAPLLAPGTPLVACAKGIEHGTHKFMTEVIAEAAPCATPAILSGPSFAHDVARGLPTAVTLAAPDEALAAALVQALGSPTFRPYHSTDVRGVEIGGAAKNVLAIAAGIVAGRQLGASALAALTTRGFAELVRLGRAHGARSETLTGLSGLGDLILTCAGPQSRNFAAGLALGRGEPLPAGKLAEGQYTAPVLVELAAARGVEMPVAQAVAAILAGAVTIDAAIEALMLRPFKAEE.

Residues tryptophan 15, arginine 35, and lysine 107 each coordinate NADPH. Sn-glycerol 3-phosphate contacts are provided by lysine 107, glycine 135, and serine 137. Residue alanine 139 coordinates NADPH. Residues lysine 190, aspartate 243, serine 253, arginine 254, and asparagine 255 each coordinate sn-glycerol 3-phosphate. Lysine 190 (proton acceptor) is an active-site residue. Arginine 254 serves as a coordination point for NADPH. The NADPH site is built by leucine 273 and glutamate 275.

It belongs to the NAD-dependent glycerol-3-phosphate dehydrogenase family.

The protein localises to the cytoplasm. It catalyses the reaction sn-glycerol 3-phosphate + NAD(+) = dihydroxyacetone phosphate + NADH + H(+). It carries out the reaction sn-glycerol 3-phosphate + NADP(+) = dihydroxyacetone phosphate + NADPH + H(+). The protein operates within membrane lipid metabolism; glycerophospholipid metabolism. Catalyzes the reduction of the glycolytic intermediate dihydroxyacetone phosphate (DHAP) to sn-glycerol 3-phosphate (G3P), the key precursor for phospholipid synthesis. This is Glycerol-3-phosphate dehydrogenase [NAD(P)+] from Bradyrhizobium sp. (strain BTAi1 / ATCC BAA-1182).